A 122-amino-acid chain; its full sequence is UPF0102 protein R00337 (122 aa).

The protein belongs to the UPF0102 family.

In Rhizobium meliloti (strain 1021) (Ensifer meliloti), this protein is UPF0102 protein R00337.